Consider the following 249-residue polypeptide: Meiotic drive suppressor wtf25 (249 aa).

The segment at Met1 to Gly40 is disordered. The segment covering Lys19–Pro30 has biased composition (basic and acidic residues). 4 helical membrane-spanning segments follow: residues Leu73 to Cys93, Trp110 to Phe130, Asn151 to Glu170, and Ser187 to Val207.

Belongs to the WTF family. In terms of assembly, homomer. Interacts with other proteins that exhibit high sequence similarity.

Its subcellular location is the spore membrane. The protein localises to the vacuole membrane. Functionally, acts as a suppressor component of the dual wtf meiotic drive system, and can suppress but not confer meiotic drive by compatible poisons. Wtf meiotic drive systems promote unequal transmission of alleles from the parental zygote to progeny spores by encoding a poison and an antidote from the same locus; the poison is trans-acting and forms toxic aggregates in all spores within an ascus, wherease the antidote is spore-specific and targets aggregates for degradation by the vacuole. Meiotic drive by wtf systems therefore lead to poisoning of all progeny that do not inherit the dual poison/antidote allele, or express a compatible antidote. This is Meiotic drive suppressor wtf25 from Schizosaccharomyces pombe (strain 972 / ATCC 24843) (Fission yeast).